Here is a 122-residue protein sequence, read N- to C-terminus: MIQQESRLKVADNSGAREVLVIKVLGGSGRRYANIGDVVVATVKDATPGGVVKKGQVVKAVVVRTKRGVRRPDGSYIRFDENACVIIRDDKSPRGTRIFGPVARELRDKDFMKIISLAPEVI.

The protein belongs to the universal ribosomal protein uL14 family. As to quaternary structure, part of the 50S ribosomal subunit. Forms a cluster with proteins L3 and L19. In the 70S ribosome, L14 and L19 interact and together make contacts with the 16S rRNA in bridges B5 and B8.

In terms of biological role, binds to 23S rRNA. Forms part of two intersubunit bridges in the 70S ribosome. In Geobacillus kaustophilus (strain HTA426), this protein is Large ribosomal subunit protein uL14.